An 831-amino-acid polypeptide reads, in one-letter code: V-type proton ATPase 116 kDa subunit a1 (831 aa).

Residues 1–388 (MGELFRSEEM…DAYGIGSYRE (388 aa)) are Cytoplasmic-facing. A helical transmembrane segment spans residues 389–407 (INPAPYTIITFPFLFAVMF). Over 408 to 409 (GD) the chain is Vacuolar. Residues 410–426 (FGHGILMTLFAVWMVVR) form a helical membrane-spanning segment. Residues 427 to 441 (ESRILSQKIDNELFS) lie on the Cytoplasmic side of the membrane. The chain crosses the membrane as a helical span at residues 442 to 471 (MMFSGRYIILLMGLFSTYTGLIYNDCFSKA). The Vacuolar segment spans residues 472 to 534 (LNLFGSSWSV…ATNKLTFLNS (63 aa)). Residues 535 to 554 (FKMKMSVILGIIHMIFGVAL) traverse the membrane as a helical segment. The Cytoplasmic segment spans residues 555–572 (SVLNHIYFKKPLNIYLSF). The chain crosses the membrane as a helical span at residues 573–593 (IPEMIFMTTLFGYLVILIIYK). Residues 594 to 638 (WCAYDVSTSMVAPSLLIHFINMFLFSYQDTSLPMLYKGQMGLQCF) are Vacuolar-facing. Residues 639 to 658 (LVVCAIICVPWMLVLKPLIL) traverse the membrane as a helical segment. The Cytoplasmic segment spans residues 659–718 (RRQYLRRKHLGTHNFGGIRVGNGPTEEDAEIIQHDQLSMHSDEEEEFDFGDTVVHQAIHT). Residues 719–743 (IEYCLGCISNTASYLRLWALSLAHA) form a helical membrane-spanning segment. The Vacuolar segment spans residues 744–764 (QLSEVLWTMVMHIGLNIRSLG). Residues 765 to 803 (GGIALVFIFSAFATLTIAILLIMEGLSAFLHALRLHWVE) form a helical membrane-spanning segment. Residues 804–831 (FRNKFYMGTGFKFLPFSFETIWEGKFDD) are Cytoplasmic-facing.

This sequence belongs to the V-ATPase 116 kDa subunit family. V-ATPase is a heteromultimeric enzyme made up of two complexes: the ATP-hydrolytic V1 complex and the proton translocation V0 complex. The V1 complex consists of three catalytic AB heterodimers that form a heterohexamer, three peripheral stalks each consisting of EG heterodimers, one central rotor including subunits D and F, and the regulatory subunits C and H. The proton translocation complex V0 consists of the proton transport subunit a, a ring of proteolipid subunits c9c'', rotary subunit d, subunits e and f, and two accessory subunits.

The protein localises to the cytoplasmic vesicle. It is found in the clathrin-coated vesicle membrane. It localises to the secretory vesicle. Its subcellular location is the synaptic vesicle membrane. The protein resides in the melanosome. In terms of biological role, subunit of the V0 complex of vacuolar(H+)-ATPase (V-ATPase), a multisubunit enzyme composed of a peripheral complex (V1) that hydrolyzes ATP and a membrane integral complex (V0) that translocates protons. V-ATPase is responsible for acidifying and maintaining the pH of intracellular compartments and in some cell types, is targeted to the plasma membrane, where it is responsible for acidifying the extracellular environment. Required for assembly and activity of the vacuolar ATPase. This Xenopus laevis (African clawed frog) protein is V-type proton ATPase 116 kDa subunit a1 (atp6v0a1).